The following is a 340-amino-acid chain: Ketol-acid reductoisomerase (NADP(+)) (340 aa).

Positions 1–182 (MRVYYDRDCD…GGGRSGIIET (182 aa)) constitute a KARI N-terminal Rossmann domain. Residues 24–27 (YGSQ), arginine 48, serine 51, serine 53, and 83–86 (DELQ) contribute to the NADP(+) site. Histidine 108 is an active-site residue. Glycine 134 is a binding site for NADP(+). Residues 183 to 329 (NFRQECETDL…EKLRGMMPWI (147 aa)) enclose the KARI C-terminal knotted domain. Positions 191, 195, 227, and 231 each coordinate Mg(2+). Serine 252 lines the substrate pocket.

The protein belongs to the ketol-acid reductoisomerase family. It depends on Mg(2+) as a cofactor.

The enzyme catalyses (2R)-2,3-dihydroxy-3-methylbutanoate + NADP(+) = (2S)-2-acetolactate + NADPH + H(+). The catalysed reaction is (2R,3R)-2,3-dihydroxy-3-methylpentanoate + NADP(+) = (S)-2-ethyl-2-hydroxy-3-oxobutanoate + NADPH + H(+). Its pathway is amino-acid biosynthesis; L-isoleucine biosynthesis; L-isoleucine from 2-oxobutanoate: step 2/4. The protein operates within amino-acid biosynthesis; L-valine biosynthesis; L-valine from pyruvate: step 2/4. Functionally, involved in the biosynthesis of branched-chain amino acids (BCAA). Catalyzes an alkyl-migration followed by a ketol-acid reduction of (S)-2-acetolactate (S2AL) to yield (R)-2,3-dihydroxy-isovalerate. In the isomerase reaction, S2AL is rearranged via a Mg-dependent methyl migration to produce 3-hydroxy-3-methyl-2-ketobutyrate (HMKB). In the reductase reaction, this 2-ketoacid undergoes a metal-dependent reduction by NADPH to yield (R)-2,3-dihydroxy-isovalerate. This chain is Ketol-acid reductoisomerase (NADP(+)), found in Cereibacter sphaeroides (strain ATCC 17023 / DSM 158 / JCM 6121 / CCUG 31486 / LMG 2827 / NBRC 12203 / NCIMB 8253 / ATH 2.4.1.) (Rhodobacter sphaeroides).